The primary structure comprises 50 residues: Toxic protein HokC (50 aa).

The Cytoplasmic segment spans residues 1–5 (MKQHK). A helical; Signal-anchor for type II membrane protein transmembrane segment spans residues 6-24 (AMIVALIVICITAVVAALV). The Periplasmic segment spans residues 25–50 (TRKDLCEVHIRTGQTEVAVFTAYESE).

It belongs to the Hok/Gef family. Homodimer; disulfide-linked.

It is found in the cell inner membrane. Toxic component of a type I toxin-antitoxin (TA) system. When overexpressed kills cells within minutes; causes collapse of the transmembrane potential and arrest of respiration. Its toxic effect is probably neutralized by antisense antitoxin RNA SokC. This is Toxic protein HokC from Escherichia coli (strain K12).